The sequence spans 350 residues: UDP-3-O-acylglucosamine N-acyltransferase (350 aa).

Residue His-251 is the Proton acceptor of the active site.

This sequence belongs to the transferase hexapeptide repeat family. LpxD subfamily. Homotrimer.

It catalyses the reaction a UDP-3-O-[(3R)-3-hydroxyacyl]-alpha-D-glucosamine + a (3R)-hydroxyacyl-[ACP] = a UDP-2-N,3-O-bis[(3R)-3-hydroxyacyl]-alpha-D-glucosamine + holo-[ACP] + H(+). It functions in the pathway bacterial outer membrane biogenesis; LPS lipid A biosynthesis. Its function is as follows. Catalyzes the N-acylation of UDP-3-O-acylglucosamine using 3-hydroxyacyl-ACP as the acyl donor. Is involved in the biosynthesis of lipid A, a phosphorylated glycolipid that anchors the lipopolysaccharide to the outer membrane of the cell. The chain is UDP-3-O-acylglucosamine N-acyltransferase from Prochlorococcus marinus (strain NATL2A).